Consider the following 438-residue polypeptide: Coenzyme A disulfide reductase (438 aa).

8-33 serves as a coordination point for FAD; the sequence is GAVAGGATCASQIRRLDKESDIIIFE. Positions 15, 19, 22, 39, and 42 each coordinate substrate. The active-site Nucleophile is the C43. C43 serves as the catalytic Redox-active. Substrate is bound at residue K71. Residue 151 to 166 coordinates NADP(+); the sequence is VLVVGAGYVSLEVLEN. FAD is bound at residue 267 to 277; it reads TNVPNIYVIGD. H299 lines the substrate pocket. Residue Y419 coordinates FAD. Position 427 (K427) interacts with substrate.

Belongs to the class-III pyridine nucleotide-disulfide oxidoreductase family. As to quaternary structure, homodimer. Requires FAD as cofactor.

The catalysed reaction is NADP(+) + 2 CoA = CoA-disulfide + NADPH + H(+). Catalyzes specifically the NADPH-dependent reduction of coenzyme A disulfide. This is Coenzyme A disulfide reductase from Staphylococcus aureus (strain MRSA252).